The sequence spans 217 residues: Large ribosomal subunit protein uL3 (217 aa).

The segment at 137 to 160 (VSASHGSHRNHRKPGSIGASSTPS) is disordered.

This sequence belongs to the universal ribosomal protein uL3 family. Part of the 50S ribosomal subunit. Forms a cluster with proteins L14 and L19.

Its function is as follows. One of the primary rRNA binding proteins, it binds directly near the 3'-end of the 23S rRNA, where it nucleates assembly of the 50S subunit. This chain is Large ribosomal subunit protein uL3, found in Clavibacter sepedonicus (Clavibacter michiganensis subsp. sepedonicus).